The following is an 89-amino-acid chain: Small ribosomal subunit protein uS15 (89 aa).

This sequence belongs to the universal ribosomal protein uS15 family. In terms of assembly, part of the 30S ribosomal subunit. Forms a bridge to the 50S subunit in the 70S ribosome, contacting the 23S rRNA.

In terms of biological role, one of the primary rRNA binding proteins, it binds directly to 16S rRNA where it helps nucleate assembly of the platform of the 30S subunit by binding and bridging several RNA helices of the 16S rRNA. Forms an intersubunit bridge (bridge B4) with the 23S rRNA of the 50S subunit in the ribosome. The sequence is that of Small ribosomal subunit protein uS15 from Rhizobium rhizogenes (strain K84 / ATCC BAA-868) (Agrobacterium radiobacter).